An 89-amino-acid chain; its full sequence is Small ribosomal subunit protein uS19 (89 aa).

This sequence belongs to the universal ribosomal protein uS19 family.

In terms of biological role, protein S19 forms a complex with S13 that binds strongly to the 16S ribosomal RNA. This Bacteroides thetaiotaomicron (strain ATCC 29148 / DSM 2079 / JCM 5827 / CCUG 10774 / NCTC 10582 / VPI-5482 / E50) protein is Small ribosomal subunit protein uS19.